The following is a 525-amino-acid chain: Cytochrome P450 4V2 (525 aa).

The helical transmembrane segment at 13 to 33 (LLLWGAASALSLAGASLVLSL) threads the bilayer. Residues Glu329 and Cys467 each contribute to the heme site.

Belongs to the cytochrome P450 family. Heme serves as cofactor. Broadly expressed. Detected in heart, brain, placenta, lung, liver, skeletal muscle, kidney, pancreas, retina, retinal pigment epithelium (RPE) and lymphocytes.

Its subcellular location is the endoplasmic reticulum membrane. It carries out the reaction dodecanoate + reduced [NADPH--hemoprotein reductase] + O2 = 12-hydroxydodecanoate + oxidized [NADPH--hemoprotein reductase] + H2O + H(+). It catalyses the reaction tetradecanoate + reduced [NADPH--hemoprotein reductase] + O2 = 14-hydroxytetradecanoate + oxidized [NADPH--hemoprotein reductase] + H2O + H(+). The enzyme catalyses hexadecanoate + reduced [NADPH--hemoprotein reductase] + O2 = 16-hydroxyhexadecanoate + oxidized [NADPH--hemoprotein reductase] + H2O + H(+). The catalysed reaction is (5Z,8Z,11Z,14Z,17Z)-eicosapentaenoate + reduced [NADPH--hemoprotein reductase] + O2 = 20-hydroxy-(5Z,8Z,11Z,14Z,17Z)-eicosapentaenoate + oxidized [NADPH--hemoprotein reductase] + H2O + H(+). It carries out the reaction (4Z,7Z,10Z,13Z,16Z,19Z)-docosahexaenoate + reduced [NADPH--hemoprotein reductase] + O2 = 22-hydroxy-(4Z,7Z,10Z,13Z,16Z,19Z)-docosahexaenoate + oxidized [NADPH--hemoprotein reductase] + H2O + H(+). It participates in lipid metabolism; fatty acid metabolism. With respect to regulation, inhibited by N-hydroxy-N'-(4-n-butyl-2-methylphenyl formamidine)(HET0016) with an IC(50) of 38 nM. In terms of biological role, a cytochrome P450 monooxygenase involved in fatty acid metabolism in the eye. Catalyzes the omega-hydroxylation of polyunsaturated fatty acids (PUFAs) docosahexaenoate (DHA) and its precursor eicosapentaenoate (EPA), and may contribute to the homeostasis of these retinal PUFAs. Omega hydroxylates saturated fatty acids such as laurate, myristate and palmitate, the catalytic efficiency decreasing in the following order: myristate &gt; laurate &gt; palmitate (C14&gt;C12&gt;C16). Mechanistically, uses molecular oxygen inserting one oxygen atom into a substrate, and reducing the second into a water molecule, with two electrons provided by NADPH via cytochrome P450 reductase (CPR; NADPH-ferrihemoprotein reductase). In Homo sapiens (Human), this protein is Cytochrome P450 4V2 (CYP4V2).